The chain runs to 257 residues: DNA repair protein RecO (257 aa).

It belongs to the RecO family.

In terms of biological role, involved in DNA repair and RecF pathway recombination. The chain is DNA repair protein RecO from Streptococcus thermophilus (strain ATCC BAA-491 / LMD-9).